A 429-amino-acid chain; its full sequence is Saccharopine dehydrogenase-like oxidoreductase (429 aa).

An N-acetylalanine modification is found at Ala-2. Phosphoserine occurs at positions 209, 215, and 217.

The protein belongs to the saccharopine dehydrogenase family.

The protein is Saccharopine dehydrogenase-like oxidoreductase (Sccpdh) of Mus musculus (Mouse).